Consider the following 219-residue polypeptide: uncharacterized protein (219 aa).

The interval 42-71 (RQPRVVPVTSSDPEVVDDEDDEDQSDDSDE) is disordered. Low complexity predominate over residues 45–54 (RVVPVTSSDP). Over residues 55–71 (EVVDDEDDEDQSDDSDE) the composition is skewed to acidic residues.

This is an uncharacterized protein from Dryophytes versicolor (chameleon treefrog).